The sequence spans 363 residues: UDP-N-acetylglucosamine--N-acetylmuramyl-(pentapeptide) pyrophosphoryl-undecaprenol N-acetylglucosamine transferase (363 aa).

UDP-N-acetyl-alpha-D-glucosamine-binding positions include 10–12 (TAG), Asn124, Arg161, Ser195, and Gln291.

This sequence belongs to the glycosyltransferase 28 family. MurG subfamily.

It is found in the cell membrane. It catalyses the reaction di-trans,octa-cis-undecaprenyl diphospho-N-acetyl-alpha-D-muramoyl-L-alanyl-D-glutamyl-meso-2,6-diaminopimeloyl-D-alanyl-D-alanine + UDP-N-acetyl-alpha-D-glucosamine = di-trans,octa-cis-undecaprenyl diphospho-[N-acetyl-alpha-D-glucosaminyl-(1-&gt;4)]-N-acetyl-alpha-D-muramoyl-L-alanyl-D-glutamyl-meso-2,6-diaminopimeloyl-D-alanyl-D-alanine + UDP + H(+). It functions in the pathway cell wall biogenesis; peptidoglycan biosynthesis. Cell wall formation. Catalyzes the transfer of a GlcNAc subunit on undecaprenyl-pyrophosphoryl-MurNAc-pentapeptide (lipid intermediate I) to form undecaprenyl-pyrophosphoryl-MurNAc-(pentapeptide)GlcNAc (lipid intermediate II). The chain is UDP-N-acetylglucosamine--N-acetylmuramyl-(pentapeptide) pyrophosphoryl-undecaprenol N-acetylglucosamine transferase from Streptomyces avermitilis (strain ATCC 31267 / DSM 46492 / JCM 5070 / NBRC 14893 / NCIMB 12804 / NRRL 8165 / MA-4680).